The primary structure comprises 357 residues: Quinolinate synthase (357 aa).

His-50 and Ser-71 together coordinate iminosuccinate. Cys-116 provides a ligand contact to [4Fe-4S] cluster. Iminosuccinate-binding positions include 142-144 and Ser-159; that span reads YAN. A [4Fe-4S] cluster-binding site is contributed by Cys-203. Residues 229–231 and Thr-246 contribute to the iminosuccinate site; that span reads HPE. Position 300 (Cys-300) interacts with [4Fe-4S] cluster.

It belongs to the quinolinate synthase family. Type 1 subfamily. [4Fe-4S] cluster serves as cofactor.

The protein resides in the cytoplasm. The catalysed reaction is iminosuccinate + dihydroxyacetone phosphate = quinolinate + phosphate + 2 H2O + H(+). Its pathway is cofactor biosynthesis; NAD(+) biosynthesis; quinolinate from iminoaspartate: step 1/1. Functionally, catalyzes the condensation of iminoaspartate with dihydroxyacetone phosphate to form quinolinate. The sequence is that of Quinolinate synthase from Shewanella sp. (strain ANA-3).